A 158-amino-acid polypeptide reads, in one-letter code: Sec-independent protein translocase protein TatB (158 aa).

The chain crosses the membrane as a helical span at residues 1 to 21 (MFDIGWSELLVIGVVALVVVG). Positions 73–158 (RSMGLDAMKQ…PAPAEPKSNA (86 aa)) are disordered. Positions 83–92 (AADRFEKWDP) are enriched in basic and acidic residues. Low complexity-rich tracts occupy residues 94–132 (KPQQ…SEPA) and 138–158 (APAA…KSNA).

Belongs to the TatB family. The Tat system comprises two distinct complexes: a TatABC complex, containing multiple copies of TatA, TatB and TatC subunits, and a separate TatA complex, containing only TatA subunits. Substrates initially bind to the TatABC complex, which probably triggers association of the separate TatA complex to form the active translocon.

The protein resides in the cell inner membrane. Functionally, part of the twin-arginine translocation (Tat) system that transports large folded proteins containing a characteristic twin-arginine motif in their signal peptide across membranes. Together with TatC, TatB is part of a receptor directly interacting with Tat signal peptides. TatB may form an oligomeric binding site that transiently accommodates folded Tat precursor proteins before their translocation. The sequence is that of Sec-independent protein translocase protein TatB from Cereibacter sphaeroides (strain ATCC 17029 / ATH 2.4.9) (Rhodobacter sphaeroides).